Here is a 246-residue protein sequence, read N- to C-terminus: Ly6/PLAUR domain-containing protein 4 (246 aa).

An N-terminal signal peptide occupies residues 1 to 26; it reads MGPQHLRLVQLFCLLGAISTLPRAGA. An N-linked (GlcNAc...) asparagine glycan is attached at Asn-117. One can recognise a UPAR/Ly6 domain in the interval 142–223; it reads CPTCVGEHMK…LNILEKSQIV (82 aa). The GPI-anchor amidated alanine moiety is linked to residue Ala-225. Positions 226 to 246 are cleaved as a propeptide — removed in mature form; it reads ASSRQDPAWGVVLGLLFAFRD.

The protein resides in the cell membrane. The protein is Ly6/PLAUR domain-containing protein 4 (LYPD4) of Homo sapiens (Human).